The following is a 255-amino-acid chain: HLA class II histocompatibility antigen, DQ alpha 2 chain (255 aa).

A signal peptide spans 1–23 (MILNKALLLGALALTAVMSPCGG). Positions 24-110 (EDIVADHVAS…RQSNSTAATN (87 aa)) are alpha-1. The Extracellular portion of the chain corresponds to 24-217 (EDIVADHVAS…IPAPMSELTE (194 aa)). 2 N-linked (GlcNAc...) asparagine glycosylation sites follow: N104 and N144. The tract at residues 111–204 (EVPEVTVFSK…GLDEPLLKHW (94 aa)) is alpha-2. The 93-residue stretch at 113 to 205 (PEVTVFSKFP…LDEPLLKHWE (93 aa)) folds into the Ig-like C1-type domain. Residues C133 and C189 are joined by a disulfide bond. Residues 205 to 217 (EPEIPAPMSELTE) are connecting peptide. The helical transmembrane segment at 218-240 (TLVCALGLSVGLMGIVVGTVFII) threads the bilayer. The Cytoplasmic portion of the chain corresponds to 241–255 (QGLRSVGASRHQGLL).

Belongs to the MHC class II family. As to quaternary structure, heterodimer of an alpha and a beta subunit; also referred as MHC class II molecule. Dimer formation with HLA-DQB2, but not with HLA-DQB1, is required for efficient exit from the endoplasmic reticulum (ER). In the ER, forms a heterononamer; 3 MHC class II molecules bind to a CD74 homotrimer (also known as invariant chain or HLA class II histocompatibility antigen gamma chain). In the endosomal/lysosomal system; CD74 undergoes sequential degradation by various proteases; leaving a small fragment termed CLIP on each MHC class II molecule. MHC class II molecule interacts with HLA_DM, and HLA_DO in B-cells, in order to release CLIP and facilitate the binding of antigenic peptides. Association with HLA-DMA also occurs in skin Langerhans cells, in post-Golgi compartments. Restricted to skin Langerhans cells, although some expression at low levels may occur at the surface of B lymphoblastoid cells.

It is found in the cell membrane. The protein resides in the endoplasmic reticulum membrane. The protein localises to the golgi apparatus. It localises to the trans-Golgi network membrane. Its subcellular location is the endosome membrane. It is found in the lysosome membrane. In terms of biological role, binds peptides derived from antigens that access the endocytic route of antigen presenting cells (APC) and presents them on the cell surface for recognition by the CD4 T-cells. The peptide binding cleft accommodates peptides of 10-30 residues. The peptides presented by MHC class II molecules are generated mostly by degradation of proteins that access the endocytic route, where they are processed by lysosomal proteases and other hydrolases. Exogenous antigens that have been endocytosed by the APC are thus readily available for presentation via MHC II molecules, and for this reason this antigen presentation pathway is usually referred to as exogenous. As membrane proteins on their way to degradation in lysosomes as part of their normal turn-over are also contained in the endosomal/lysosomal compartments, exogenous antigens must compete with those derived from endogenous components. Autophagy is also a source of endogenous peptides, autophagosomes constitutively fuse with MHC class II loading compartments. In addition to APCs, other cells of the gastrointestinal tract, such as epithelial cells, express MHC class II molecules and CD74 and act as APCs, which is an unusual trait of the GI tract. To produce a MHC class II molecule that presents an antigen, three MHC class II molecules (heterodimers of an alpha and a beta chain) associate with a CD74 trimer in the ER to form a heterononamer. Soon after the entry of this complex into the endosomal/lysosomal system where antigen processing occurs, CD74 undergoes a sequential degradation by various proteases, including CTSS and CTSL, leaving a small fragment termed CLIP (class-II-associated invariant chain peptide). The removal of CLIP is facilitated by HLA-DM via direct binding to the alpha-beta-CLIP complex so that CLIP is released. HLA-DM stabilizes MHC class II molecules until primary high affinity antigenic peptides are bound. The MHC II molecule bound to a peptide is then transported to the cell membrane surface. In B-cells, the interaction between HLA-DM and MHC class II molecules is regulated by HLA-DO. Primary dendritic cells (DCs) also to express HLA-DO. Lysosomal microenvironment has been implicated in the regulation of antigen loading into MHC II molecules, increased acidification produces increased proteolysis and efficient peptide loading. The chain is HLA class II histocompatibility antigen, DQ alpha 2 chain (HLA-DQA2) from Homo sapiens (Human).